The chain runs to 407 residues: Carbamoyl phosphate synthase small chain (407 aa).

The segment at 1-203 (MSQNESGTIA…EPCGEYEGKE (203 aa)) is CPSase. Residues S61, G255, and G257 each contribute to the L-glutamine site. One can recognise a Glutamine amidotransferase type-1 domain in the interval 207–405 (TVAAVDLGIK…CELMKNNSKE (199 aa)). C283 acts as the Nucleophile in catalysis. L-glutamine is bound by residues F284, Q287, N325, G327, and F328. Catalysis depends on residues H378 and E380.

The protein belongs to the CarA family. As to quaternary structure, composed of two chains; the small (or glutamine) chain promotes the hydrolysis of glutamine to ammonia, which is used by the large (or ammonia) chain to synthesize carbamoyl phosphate. Tetramer of heterodimers (alpha,beta)4.

The catalysed reaction is hydrogencarbonate + L-glutamine + 2 ATP + H2O = carbamoyl phosphate + L-glutamate + 2 ADP + phosphate + 2 H(+). The enzyme catalyses L-glutamine + H2O = L-glutamate + NH4(+). Its pathway is amino-acid biosynthesis; L-arginine biosynthesis; carbamoyl phosphate from bicarbonate: step 1/1. The protein operates within pyrimidine metabolism; UMP biosynthesis via de novo pathway; (S)-dihydroorotate from bicarbonate: step 1/3. Small subunit of the glutamine-dependent carbamoyl phosphate synthetase (CPSase). CPSase catalyzes the formation of carbamoyl phosphate from the ammonia moiety of glutamine, carbonate, and phosphate donated by ATP, constituting the first step of 2 biosynthetic pathways, one leading to arginine and/or urea and the other to pyrimidine nucleotides. The small subunit (glutamine amidotransferase) binds and cleaves glutamine to supply the large subunit with the substrate ammonia. In Bifidobacterium longum (strain NCC 2705), this protein is Carbamoyl phosphate synthase small chain.